Here is a 369-residue protein sequence, read N- to C-terminus: WAT1-related protein At3g53210 (369 aa).

10 helical membrane-spanning segments follow: residues 12-31 (IAMV…MRYA), 39-59 (LVFP…SAYF), 72-92 (FLIQ…GFYI), 103-123 (ASAT…LLGI), 133-153 (GIAK…ITLY), 182-202 (WTLG…WIVL), 214-234 (FSFV…ISAY), 252-272 (ALLY…IYVV), 278-298 (LFVS…ATLA), and 303-323 (FYLG…LVVM). EamA domains are found at residues 24–150 (NHVI…SLVI) and 194–323 (LCWS…LVVM). Residues 348–369 (GDEEDYHNNKPRSPISQPLISS) form a disordered region.

It belongs to the drug/metabolite transporter (DMT) superfamily. Plant drug/metabolite exporter (P-DME) (TC 2.A.7.4) family.

The protein localises to the membrane. In Arabidopsis thaliana (Mouse-ear cress), this protein is WAT1-related protein At3g53210.